The following is a 275-amino-acid chain: NH(3)-dependent NAD(+) synthetase (275 aa).

Position 39–46 (Gly39–Ser46) interacts with ATP. A Mg(2+)-binding site is contributed by Asp45. A deamido-NAD(+)-binding site is contributed by Arg124. Thr144 contributes to the ATP binding site. Position 149 (Glu149) interacts with Mg(2+). Deamido-NAD(+) contacts are provided by Lys157 and Asp164. ATP-binding residues include Lys173 and Ser195. Position 255–256 (His255–Lys256) interacts with deamido-NAD(+).

Belongs to the NAD synthetase family. As to quaternary structure, homodimer.

It catalyses the reaction deamido-NAD(+) + NH4(+) + ATP = AMP + diphosphate + NAD(+) + H(+). It functions in the pathway cofactor biosynthesis; NAD(+) biosynthesis; NAD(+) from deamido-NAD(+) (ammonia route): step 1/1. Functionally, catalyzes the ATP-dependent amidation of deamido-NAD to form NAD. Uses ammonia as a nitrogen source. In Staphylothermus marinus (strain ATCC 43588 / DSM 3639 / JCM 9404 / F1), this protein is NH(3)-dependent NAD(+) synthetase.